Reading from the N-terminus, the 222-residue chain is Eukaryotic translation initiation factor 3 subunit K (222 aa).

A PCI domain is found at 46 to 208 (YDLEANLAVL…KIKTKNITEK (163 aa)).

It belongs to the eIF-3 subunit K family. Component of the eukaryotic translation initiation factor 3 (eIF-3) complex. The eIF-3 complex interacts with pix.

Its subcellular location is the cytoplasm. Functionally, component of the eukaryotic translation initiation factor 3 (eIF-3) complex, which is involved in protein synthesis of a specialized repertoire of mRNAs and, together with other initiation factors, stimulates binding of mRNA and methionyl-tRNAi to the 40S ribosome. The eIF-3 complex specifically targets and initiates translation of a subset of mRNAs involved in cell proliferation. In Drosophila grimshawi (Hawaiian fruit fly), this protein is Eukaryotic translation initiation factor 3 subunit K.